Here is a 55-residue protein sequence, read N- to C-terminus: Large ribosomal subunit protein bL33 (55 aa).

Belongs to the bacterial ribosomal protein bL33 family.

The polypeptide is Large ribosomal subunit protein bL33 (Pseudarthrobacter chlorophenolicus (strain ATCC 700700 / DSM 12829 / CIP 107037 / JCM 12360 / KCTC 9906 / NCIMB 13794 / A6) (Arthrobacter chlorophenolicus)).